Reading from the N-terminus, the 336-residue chain is Apyrase (336 aa).

A signal peptide spans 1 to 21 (MFLKFCVVAFAICLSINLSEG). The N-linked (GlcNAc...) asparagine glycan is linked to asparagine 209.

It belongs to the apyrase family. It depends on Ca(2+) as a cofactor. As to expression, salivary gland (at protein level).

The protein resides in the secreted. The enzyme catalyses a ribonucleoside 5'-triphosphate + 2 H2O = a ribonucleoside 5'-phosphate + 2 phosphate + 2 H(+). In terms of biological role, facilitates hematophagy by inhibiting ADP- and collagen-dependent platelet aggregation in the host. Cleaves adenosine triphosphate (ATP) and adenosine diphosphate (ADP) to adenosine monophosphate (AMP) and inorganic phosphate in calcium-dependent manner. The polypeptide is Apyrase (Phlebotomus duboscqi (Sandfly)).